The following is a 383-amino-acid chain: Lipid-A-disaccharide synthase (383 aa).

This sequence belongs to the LpxB family.

It carries out the reaction a lipid X + a UDP-2-N,3-O-bis[(3R)-3-hydroxyacyl]-alpha-D-glucosamine = a lipid A disaccharide + UDP + H(+). It participates in bacterial outer membrane biogenesis; LPS lipid A biosynthesis. Condensation of UDP-2,3-diacylglucosamine and 2,3-diacylglucosamine-1-phosphate to form lipid A disaccharide, a precursor of lipid A, a phosphorylated glycolipid that anchors the lipopolysaccharide to the outer membrane of the cell. This is Lipid-A-disaccharide synthase from Aliivibrio fischeri (strain ATCC 700601 / ES114) (Vibrio fischeri).